The chain runs to 224 residues: PKHD-type hydroxylase KPN78578_12210 (224 aa).

Residues T77–S176 form the Fe2OG dioxygenase domain. Fe cation contacts are provided by H95, D97, and H157. Residue R167 participates in 2-oxoglutarate binding.

Fe(2+) is required as a cofactor. It depends on L-ascorbate as a cofactor.

The polypeptide is PKHD-type hydroxylase KPN78578_12210 (Klebsiella pneumoniae subsp. pneumoniae (strain ATCC 700721 / MGH 78578)).